The following is a 276-amino-acid chain: Omega-amidase NIT2 (276 aa).

The CN hydrolase domain maps to 4-248 (FRLALIQLQI…EAIVYSDIDL (245 aa)). A Phosphoserine modification is found at serine 26. Glutamate 43 acts as the Proton acceptor in catalysis. The residue at position 68 (lysine 68) is an N6-acetyllysine; alternate. Lysine 68 carries the N6-succinyllysine; alternate modification. Residue lysine 112 is the Proton donor of the active site. An N6-succinyllysine mark is found at lysine 123 and lysine 130. Cysteine 153 acts as the Nucleophile in catalysis.

As to quaternary structure, homodimer. In terms of tissue distribution, detected in fetal brain (at protein level). Ubiquitous. Detected in heart, brain, placenta, lung, liver, skeletal muscle, kidney, pancreas, prostate, spleen, thymus, prostate, testis, ovary, small intestine and colon.

The protein localises to the cytoplasm. It catalyses the reaction a monoamide of a dicarboxylate + H2O = a dicarboxylate + NH4(+). It carries out the reaction 2-oxoglutaramate + H2O = 2-oxoglutarate + NH4(+). The catalysed reaction is 2-oxosuccinamate + H2O = oxaloacetate + NH4(+). Has omega-amidase activity. The role of omega-amidase is to remove potentially toxic intermediates by converting 2-oxoglutaramate and 2-oxosuccinamate to biologically useful 2-oxoglutarate and oxaloacetate, respectively. In Homo sapiens (Human), this protein is Omega-amidase NIT2 (NIT2).